A 653-amino-acid polypeptide reads, in one-letter code: tRNA uridine 5-carboxymethylaminomethyl modification enzyme MnmG (653 aa).

Residues 18–23 (GAGHAG), Val130, and Thr195 each bind FAD. NAD(+) is bound at residue 287–301 (GPRYCPSIEDKVVRF). Residue Gln384 participates in FAD binding. The segment at 624 to 653 (SQTKSSASVDKRASSDNESSRPTSSASDSL) is disordered. Residues 632–642 (VDKRASSDNES) are compositionally biased toward basic and acidic residues. The span at 643–653 (SRPTSSASDSL) shows a compositional bias: polar residues.

Belongs to the MnmG family. As to quaternary structure, homodimer. Heterotetramer of two MnmE and two MnmG subunits. FAD serves as cofactor.

The protein resides in the cytoplasm. NAD-binding protein involved in the addition of a carboxymethylaminomethyl (cmnm) group at the wobble position (U34) of certain tRNAs, forming tRNA-cmnm(5)s(2)U34. This is tRNA uridine 5-carboxymethylaminomethyl modification enzyme MnmG from Rhodopirellula baltica (strain DSM 10527 / NCIMB 13988 / SH1).